The chain runs to 480 residues: NADH-quinone oxidoreductase subunit N (480 aa).

The next 13 helical transmembrane spans lie at 11–31 (VIPE…DLFV), 38–58 (ITYG…IALA), 74–94 (GLSD…FLYS), 109–129 (YVLG…YSFL), 163–183 (FILG…LYGI), 200–220 (GAGL…GLAF), 239–259 (PTSV…AIIM), 273–293 (WQGM…VVAI), 301–321 (MLAY…LAGT), 329–349 (LFYT…IILL), 372–392 (FAFI…TVGF), 405–425 (VEMI…AFYY), and 451–471 (VVLS…GLLM).

It belongs to the complex I subunit 2 family. As to quaternary structure, NDH-1 is composed of 14 different subunits. Subunits NuoA, H, J, K, L, M, N constitute the membrane sector of the complex.

It localises to the cell inner membrane. It carries out the reaction a quinone + NADH + 5 H(+)(in) = a quinol + NAD(+) + 4 H(+)(out). NDH-1 shuttles electrons from NADH, via FMN and iron-sulfur (Fe-S) centers, to quinones in the respiratory chain. The immediate electron acceptor for the enzyme in this species is believed to be ubiquinone. Couples the redox reaction to proton translocation (for every two electrons transferred, four hydrogen ions are translocated across the cytoplasmic membrane), and thus conserves the redox energy in a proton gradient. This chain is NADH-quinone oxidoreductase subunit N, found in Thioalkalivibrio sulfidiphilus (strain HL-EbGR7).